Here is a 381-residue protein sequence, read N- to C-terminus: Creatine kinase B-type (381 aa).

S4 carries the phosphoserine modification. In terms of domain architecture, Phosphagen kinase N-terminal spans 11–98; the sequence is KLRFPAEDEF…FDPIIEDRHG (88 aa). Phosphothreonine is present on T35. K45 participates in a covalent cross-link: Glycyl lysine isopeptide (Lys-Gly) (interchain with G-Cter in ubiquitin). V72 contributes to the creatine binding site. Positions 96–110 are enriched in basic and acidic residues; sequence RHGGYKPSDEHKTDL. The segment at 96–122 is disordered; the sequence is RHGGYKPSDEHKTDLNPDNLQGGDDLD. Glycyl lysine isopeptide (Lys-Gly) (interchain with G-Cter in ubiquitin) cross-links involve residues K101 and K107. Y125 carries the phosphotyrosine modification. One can recognise a Phosphagen kinase C-terminal domain in the interval 125–367; it reads YVLSSRVRTG…KLLIEMEQRL (243 aa). ATP is bound by residues 128-132, R130, R132, and H191; that span reads SSRVR. The interval 130–138 is internal MTS-like signal; that stretch reads RVRTGRSIR. Phosphoserine is present on S199. Creatine is bound at residue E232. R236 contacts ATP. A 3'-nitrotyrosine modification is found at Y269. Position 285 (S285) interacts with creatine. Residue R292 participates in ATP binding. Position 309 is a phosphoserine (S309). ATP contacts are provided by residues R320, 320 to 325, and D335; that span reads RGTGGV. Phosphothreonine is present on T322. K381 is covalently cross-linked (Glycyl lysine isopeptide (Lys-Gly) (interchain with G-Cter in ubiquitin)).

Belongs to the ATP:guanido phosphotransferase family. In terms of assembly, dimer of identical or non-identical chains, which can be either B (brain type) or M (muscle type). With MM being the major form in skeletal muscle and myocardium, MB existing in myocardium, and BB existing in many tissues, especially brain. Interacts with SLC12A6 (via C-terminus); the interaction may be required for SLC12A6 potassium-chloride cotransport activity. In terms of processing, ubiquitinated by the ECS(ASB9) complex, leading to its degradation by the proteasome.

The protein resides in the cytoplasm. It localises to the cytosol. The protein localises to the mitochondrion. Its subcellular location is the cell membrane. It catalyses the reaction creatine + ATP = N-phosphocreatine + ADP + H(+). Functionally, reversibly catalyzes the transfer of phosphate between ATP and various phosphogens (e.g. creatine phosphate). Creatine kinase isoenzymes play a central role in energy transduction in tissues with large, fluctuating energy demands, such as skeletal muscle, heart, brain and spermatozoa. Acts as a key regulator of adaptive thermogenesis as part of the futile creatine cycle: localizes to the mitochondria of thermogenic fat cells and acts by mediating phosphorylation of creatine to initiate a futile cycle of creatine phosphorylation and dephosphorylation. During the futile creatine cycle, creatine and N-phosphocreatine are in a futile cycle, which dissipates the high energy charge of N-phosphocreatine as heat without performing any mechanical or chemical work. This is Creatine kinase B-type from Homo sapiens (Human).